Consider the following 264-residue polypeptide: Phosphonoacetaldehyde hydrolase (264 aa).

Asp-9 (nucleophile) is an active-site residue. 2 residues coordinate Mg(2+): Asp-9 and Ala-11. Residue Lys-50 is the Schiff-base intermediate with substrate of the active site. Asp-183 provides a ligand contact to Mg(2+).

Belongs to the HAD-like hydrolase superfamily. PhnX family. In terms of assembly, homodimer. Mg(2+) serves as cofactor.

It catalyses the reaction phosphonoacetaldehyde + H2O = acetaldehyde + phosphate + H(+). Its function is as follows. Involved in phosphonate degradation. This Bacillus cereus (strain ATCC 14579 / DSM 31 / CCUG 7414 / JCM 2152 / NBRC 15305 / NCIMB 9373 / NCTC 2599 / NRRL B-3711) protein is Phosphonoacetaldehyde hydrolase.